The following is a 144-amino-acid chain: Large ribosomal subunit protein uL15 (144 aa).

Residues 1–54 (MRLNTLSPAEGSKKAGKRLGRGIGSGLGKTGGRGHKGQKSRSGGGVRRGFEGGQ) are disordered. Over residues 21-31 (RGIGSGLGKTG) the composition is skewed to gly residues.

The protein belongs to the universal ribosomal protein uL15 family. In terms of assembly, part of the 50S ribosomal subunit.

Binds to the 23S rRNA. In Salmonella arizonae (strain ATCC BAA-731 / CDC346-86 / RSK2980), this protein is Large ribosomal subunit protein uL15.